Reading from the N-terminus, the 357-residue chain is RNA 3'-terminal phosphate cyclase (357 aa).

ATP-binding positions include glutamine 102 and histidine 293–aspartate 296. Histidine 319 functions as the Tele-AMP-histidine intermediate in the catalytic mechanism.

Belongs to the RNA 3'-terminal cyclase family. Type 1 subfamily.

It localises to the cytoplasm. It carries out the reaction a 3'-end 3'-phospho-ribonucleotide-RNA + ATP = a 3'-end 2',3'-cyclophospho-ribonucleotide-RNA + AMP + diphosphate. Functionally, catalyzes the conversion of 3'-phosphate to a 2',3'-cyclic phosphodiester at the end of RNA. The mechanism of action of the enzyme occurs in 3 steps: (A) adenylation of the enzyme by ATP; (B) transfer of adenylate to an RNA-N3'P to produce RNA-N3'PP5'A; (C) and attack of the adjacent 2'-hydroxyl on the 3'-phosphorus in the diester linkage to produce the cyclic end product. The biological role of this enzyme is unknown but it is likely to function in some aspects of cellular RNA processing. The chain is RNA 3'-terminal phosphate cyclase from Desulfurococcus amylolyticus (strain DSM 18924 / JCM 16383 / VKM B-2413 / 1221n) (Desulfurococcus kamchatkensis).